Here is a 930-residue protein sequence, read N- to C-terminus: MSKKRLYEIAKELGKESKEVVARAKELGLDVKSHSSSVEEAVAAKIAASFKPAAAPKVEAKPAAPKVSAEKKAEKSEPAKPAVAKEEAKPAEPVAPKTEKVAVKPQSRNFKAEREARAKEQAERRKQNKGNNRDQQQNGNRQKNDGRNGGKQGQSNRDNRRFNDQAKKQQGQQKRRNERRQQEDKRSNQAAPRIDFKARAAALKAEQNAEYARSSEERFKQYQAAKEALAQANKRKEPEEIFEEAAKLAEQAQQVQAVVEVVPEKKEPAVDTRRKKQARPDKNRDDYDHEEDGPRKQQKNRSSQNQVRNQKNSNWNNNKKNKKGNNKNNRNQTPKPVTERKFHELPTEFEYTDGMTVAEIAKRIKREPAEIVKKLFMMGVMATQNQSLDGETIELLMVDYGIEAKQKVEVDNADIERFFVEDGYLNEDELVERPPVVTIMGHVDHGKTTLLDTLRNSRVATGEAGGITQHIGAYQIVENGKKITFLDTPGHAAFTSMRARGASVTDITILVVAADDGVMPQTIEAINHSKAANVPIIVAINKIDKPGANPERVIGELAEHGVMSTAWGGDSEFVEISAKFNQNIEELLETVLLVAEIQELKADPTVRAIGTVIEARLDKGKGAVATLLVQQGTLNVQDPIVVGNTFGRVRAMTNDLGRRVKVAGPSTPVSITGLNEAPMAGDHFAVYEDEKSARAAGEERAKRALMKQRQATQRVSLENLFDTLKAGELKSVNVIIKADVQGSVEALSASLQKIDVEGVKVTIVHSAVGAINESDVTLAEASNAFIVGFNVRPTPQARQQAEADDVEIRLHSIIYKVIEEMEEAMKGMLDSEFEEKVIGEAVIRETFKVSKVGTIGGFMVINGKVARDSKVRVIRDGVVIYDGELASLKHYKDDVKEVTNGREGGLMIDGYNDIKMDDVIEAYVMEEIKR.

Positions 50–67 are enriched in low complexity; that stretch reads FKPAAAPKVEAKPAAPKV. 2 disordered regions span residues 50-217 and 260-346; these read FKPA…SSEE and EVVP…HELP. Composition is skewed to basic and acidic residues over residues 68 to 90 and 110 to 125; these read SAEK…EAKP and FKAE…AERR. Positions 129–141 are enriched in low complexity; it reads KGNNRDQQQNGNR. 2 stretches are compositionally biased toward basic and acidic residues: residues 157–167 and 262–295; these read RDNRRFNDQAK and VPEK…DGPR. Residues 309 to 318 show a composition bias toward low complexity; that stretch reads NQKNSNWNNN. Residues 337 to 346 are compositionally biased toward basic and acidic residues; the sequence is VTERKFHELP. In terms of domain architecture, tr-type G spans 432-599; it reads ERPPVVTIMG…TVLLVAEIQE (168 aa). The interval 441-448 is G1; sequence GHVDHGKT. 441-448 is a binding site for GTP; sequence GHVDHGKT. The tract at residues 466–470 is G2; it reads GITQH. Residues 487 to 490 form a G3 region; that stretch reads DTPG. GTP contacts are provided by residues 487-491 and 541-544; these read DTPGH and NKID. The G4 stretch occupies residues 541–544; the sequence is NKID. A G5 region spans residues 577–579; sequence SAK.

It belongs to the TRAFAC class translation factor GTPase superfamily. Classic translation factor GTPase family. IF-2 subfamily.

It localises to the cytoplasm. In terms of biological role, one of the essential components for the initiation of protein synthesis. Protects formylmethionyl-tRNA from spontaneous hydrolysis and promotes its binding to the 30S ribosomal subunits. Also involved in the hydrolysis of GTP during the formation of the 70S ribosomal complex. The protein is Translation initiation factor IF-2 of Streptococcus pneumoniae (strain ATCC 700669 / Spain 23F-1).